Consider the following 544-residue polypeptide: 4-coumarate--CoA ligase 1 (544 aa).

Residues serine 190, serine 191, glycine 192, threonine 193, threonine 194, and lysine 198 each contribute to the ATP site. Tyrosine 240 contributes to the (E)-4-coumaroyl-AMP binding site. Residue lysine 261 coordinates CoA. An SBD1 region spans residues aspartate 263–glutamine 332. Alanine 310, glutamine 332, glycine 333, threonine 337, and methionine 345 together coordinate (E)-4-coumaroyl-AMP. ATP contacts are provided by glutamine 332, glycine 333, and threonine 337. Residues glycine 333–tyrosine 400 are SBD2. ATP contacts are provided by aspartate 421 and arginine 436. (E)-4-coumaroyl-AMP-binding residues include lysine 438 and lysine 442. Residues lysine 444 and glycine 445 each coordinate CoA. Lysine 527 contacts ATP.

It belongs to the ATP-dependent AMP-binding enzyme family. The cofactor is Mg(2+).

The catalysed reaction is (E)-4-coumarate + ATP + CoA = (E)-4-coumaroyl-CoA + AMP + diphosphate. It carries out the reaction (E)-4-coumarate + ATP + H(+) = (E)-4-coumaroyl-AMP + diphosphate. It catalyses the reaction (E)-4-coumaroyl-AMP + CoA = (E)-4-coumaroyl-CoA + AMP + H(+). The protein operates within phytoalexin biosynthesis; 3,4',5-trihydroxystilbene biosynthesis; 3,4',5-trihydroxystilbene from trans-4-coumarate: step 1/2. Functionally, carboxylate--CoA ligase that may use 4-coumarate as substrate. Follows a two-step reaction mechanism, wherein the carboxylate substrate first undergoes adenylation by ATP, followed by a thioesterification in the presence of CoA to yield the final CoA thioester. The sequence is that of 4-coumarate--CoA ligase 1 (4CL1) from Petroselinum crispum (Parsley).